A 449-amino-acid polypeptide reads, in one-letter code: Xylose isomerase (449 aa).

Active-site residues include H103 and D106. Positions 234, 270, 273, 298, 309, 311, and 342 each coordinate Mg(2+).

This sequence belongs to the xylose isomerase family. In terms of assembly, homotetramer. Mg(2+) serves as cofactor.

It localises to the cytoplasm. It carries out the reaction alpha-D-xylose = alpha-D-xylulofuranose. In Levilactobacillus brevis (strain ATCC 367 / BCRC 12310 / CIP 105137 / JCM 1170 / LMG 11437 / NCIMB 947 / NCTC 947) (Lactobacillus brevis), this protein is Xylose isomerase.